The following is a 587-amino-acid chain: Phosphatidate phosphatase APP1 (587 aa).

2 disordered regions span residues 1-28 (MNSQGYDESSSSTAATSGPTSGDPRMGK) and 150-178 (PPHLEEDSGDLNDSQSSIESSLSSKSENR). Composition is skewed to low complexity over residues 9–22 (SSSSTAATSGPTSG) and 163–174 (SQSSIESSLSSK). Residues 281–285 (DIDDT) carry the DXDXT motif motif. Residues 452-521 (QQRPMQMTKS…NRQLPNLDAN (70 aa)) are disordered. Residues 467–483 (RRPPPPPIPSTQKPSLT) form an interaction with SH3 domain of ABP1 region.

As to quaternary structure, monomer. Interacts with ABP1. Requires Mg(2+) as cofactor. In terms of processing, N-glycosylated.

Its subcellular location is the cytoplasm. The protein localises to the cytoskeleton. The protein resides in the actin patch. It carries out the reaction a 1,2-diacyl-sn-glycero-3-phosphate + H2O = a 1,2-diacyl-sn-glycerol + phosphate. It catalyses the reaction 1,2-di-(9Z-octadecenoyl)-sn-glycero-3-phosphate + H2O = 1,2-di-(9Z-octadecenoyl)-sn-glycerol + phosphate. Its activity is regulated as follows. Inhibited by N-ethylmaleimide. Mg(2+)-dependent phosphatidate (PA) phosphatase which catalyzes the dephosphorylation of PA to yield diacylglycerol. May play a role in vesicular trafficking through its PAP activity at cortical actin patches. Can also utilize diacylglycerol pyrophosphate and lyso-PA as substrates with specificity constants 4- and 7-fold lower, respectively, when compared with PA. This Saccharomyces cerevisiae (strain ATCC 204508 / S288c) (Baker's yeast) protein is Phosphatidate phosphatase APP1 (APP1).